We begin with the raw amino-acid sequence, 296 residues long: Haloalkane dehalogenase (296 aa).

In terms of domain architecture, AB hydrolase-1 spans 31 to 155 (PILFQHGNPT…QDRDLFQAFR (125 aa)). Asp-108 serves as the catalytic Nucleophile. Residue Glu-132 is the Proton donor of the active site. Residue His-272 is the Proton acceptor of the active site.

It belongs to the haloalkane dehalogenase family. Type 2 subfamily. In terms of assembly, monomer.

Its subcellular location is the periplasm. It carries out the reaction 1-haloalkane + H2O = a halide anion + a primary alcohol + H(+). The enzyme catalyses (3R,6R)-1,3,4,6-tetrachlorocyclohexa-1,4-diene + 2 H2O = 2,5-dichlorocyclohexa-2,5-dien-1,4-diol + 2 chloride + 2 H(+). It functions in the pathway xenobiotic degradation; gamma-hexachlorocyclohexane degradation. In terms of biological role, catalyzes hydrolytic cleavage of carbon-halogen bonds in halogenated aliphatic compounds, leading to the formation of the corresponding primary alcohols, halide ions and protons. Is involved in the degradation of the important environmental pollutant gamma-hexachlorocyclohexane (gamma-HCH or lindane) as it also catalyzes conversion of 1,3,4,6-tetrachloro-1,4-cyclohexadiene (1,4-TCDN) to 2,5-dichloro-2,5-cyclohexadiene-1,4-diol (2,5-DDOL) via the intermediate 2,4,5-trichloro-2,5-cyclohexadiene-1-ol (2,4,5-DNOL). The chain is Haloalkane dehalogenase from Sphingobium indicum (strain DSM 16412 / CCM 7286 / MTCC 6364 / B90A).